We begin with the raw amino-acid sequence, 180 residues long: Lipid droplet coating protein Cap20 (180 aa).

Belongs to the perilipin family. Interacts with class I hydrophobin Hydr1. Interacts also with the cAMP-dependent protein kinase catalytic subunit PkaC1.

The protein localises to the lipid droplet. Its function is as follows. Lipid droplet coating protein that regulates lipid metabolism, appressorial turgor pressure, and virulence. Mature appressoria with high turgor pressure are essential to penetrate the leaf surface. The polypeptide is Lipid droplet coating protein Cap20 (Colletotrichum siamense (Anthracnose fungus)).